We begin with the raw amino-acid sequence, 169 residues long: Large ribosomal subunit protein uL5 (169 aa).

The protein belongs to the universal ribosomal protein uL5 family. In terms of assembly, part of the 50S ribosomal subunit; contacts the 5S rRNA and probably tRNA. Forms a bridge to the 30S subunit in the 70S ribosome.

Functionally, this is one of the proteins that bind and probably mediate the attachment of the 5S RNA into the large ribosomal subunit, where it forms part of the central protuberance. In the 70S ribosome it contacts protein S13 of the 30S subunit (bridge B1b), connecting the 2 subunits; this bridge is implicated in subunit movement. May contact the P site tRNA; the 5S rRNA and some of its associated proteins might help stabilize positioning of ribosome-bound tRNAs. This chain is Large ribosomal subunit protein uL5, found in Nanoarchaeum equitans (strain Kin4-M).